The sequence spans 247 residues: Phosphate import ATP-binding protein PstB (247 aa).

One can recognise an ABC transporter domain in the interval 2 to 242 (CRDVNVYYGE…PRHPLTEDYI (241 aa)). Position 32-39 (32-39 (GPSGCGKS)) interacts with ATP.

The protein belongs to the ABC transporter superfamily. Phosphate importer (TC 3.A.1.7) family. As to quaternary structure, the complex is composed of two ATP-binding proteins (PstB), two transmembrane proteins (PstC and PstA) and a solute-binding protein (PstS).

Its subcellular location is the cell inner membrane. It carries out the reaction phosphate(out) + ATP + H2O = ADP + 2 phosphate(in) + H(+). In terms of biological role, part of the ABC transporter complex PstSACB involved in phosphate import. Responsible for energy coupling to the transport system. The polypeptide is Phosphate import ATP-binding protein PstB (Methylococcus capsulatus (strain ATCC 33009 / NCIMB 11132 / Bath)).